The sequence spans 210 residues: Ribosomal RNA small subunit methyltransferase G (210 aa).

S-adenosyl-L-methionine is bound by residues Gly76, Leu81, Val127–Glu128, and Arg142.

Belongs to the methyltransferase superfamily. RNA methyltransferase RsmG family.

The protein localises to the cytoplasm. The catalysed reaction is guanosine(527) in 16S rRNA + S-adenosyl-L-methionine = N(7)-methylguanosine(527) in 16S rRNA + S-adenosyl-L-homocysteine. Specifically methylates the N7 position of guanine in position 527 of 16S rRNA. This is Ribosomal RNA small subunit methyltransferase G from Aliivibrio fischeri (strain ATCC 700601 / ES114) (Vibrio fischeri).